The chain runs to 394 residues: Na(+)/H(+) antiporter NhaA (394 aa).

11 consecutive transmembrane segments (helical) span residues 24 to 44 (AGLV…SPLA), 58 to 78 (LSVQ…LVGL), 96 to 116 (TLPG…YVML), 126 to 146 (GWAI…SLLG), 155 to 175 (IFLA…IAIF), 180 to 200 (INVA…SLCA), 214 to 234 (AVLW…GVLL), 267 to 287 (VAFA…FASI), 300 to 320 (VAAG…ALMV), 336 to 356 (VLGV…IGLL), and 370 to 390 (GILA…RIAG).

Belongs to the NhaA Na(+)/H(+) (TC 2.A.33) antiporter family.

It localises to the cell inner membrane. It catalyses the reaction Na(+)(in) + 2 H(+)(out) = Na(+)(out) + 2 H(+)(in). Na(+)/H(+) antiporter that extrudes sodium in exchange for external protons. The sequence is that of Na(+)/H(+) antiporter NhaA from Azorhizobium caulinodans (strain ATCC 43989 / DSM 5975 / JCM 20966 / LMG 6465 / NBRC 14845 / NCIMB 13405 / ORS 571).